We begin with the raw amino-acid sequence, 316 residues long: Neuroguidin-B (316 aa).

2 disordered regions span residues 124–169 and 292–316; these read ENDP…SKVK and VPFM…RRRH. Residues 145 to 156 show a composition bias toward acidic residues; sequence DERESDSGEEGA. Residues 296–316 are compositionally biased toward basic residues; the sequence is KKSKKGPKKSKKKKGFSRRRH.

This sequence belongs to the SAS10 family. Part of the small subunit (SSU) processome, composed of more than 70 proteins and the RNA chaperone small nucleolar RNA (snoRNA) U3.

The protein localises to the nucleus. It is found in the nucleolus. It localises to the chromosome. The protein resides in the centromere. Its subcellular location is the cytoplasm. The protein localises to the cell projection. It is found in the axon. It localises to the dendrite. The protein resides in the filopodium. Part of the small subunit (SSU) processome, first precursor of the small eukaryotic ribosomal subunit. During the assembly of the SSU processome in the nucleolus, many ribosome biogenesis factors, an RNA chaperone and ribosomal proteins associate with the nascent pre-rRNA and work in concert to generate RNA folding, modifications, rearrangements and cleavage as well as targeted degradation of pre-ribosomal RNA by the RNA exosome. Its dissociation from the complex determines the transition from state pre-A1 to state pre-A1*. May inhibit mRNA translation. In Xenopus laevis (African clawed frog), this protein is Neuroguidin-B (ngdn-b).